The primary structure comprises 332 residues: Endo-1,4-beta-xylanase B (332 aa).

Positions 2–331 (STEIPSLSAS…KDSFWRIIGQ (330 aa)) constitute a GH10 domain. Glu-134 (proton donor) is an active-site residue. The active-site Nucleophile is Glu-241.

Belongs to the glycosyl hydrolase 10 (cellulase F) family. Cytoplasmic xylanase subfamily.

The protein localises to the cytoplasm. The enzyme catalyses Endohydrolysis of (1-&gt;4)-beta-D-xylosidic linkages in xylans.. It functions in the pathway glycan degradation; xylan degradation. Its activity is regulated as follows. Completely inhibited by Ag(2+), Cu(2+), Hg(2+), Mn(2+), Pb(2+) and Sn(2+). Strongly inhibited by Fe(2+) and Zn(2+). Co(2+) and Ni(2+) cause little inhibition while Ca(2+) and Mg(2+) do not affect enzyme activity, and Ba(2+) produces a small stimulating effect. Irreversibly inactivated by SDS in vitro. Its function is as follows. Plays a role in plant xylan biodegradation, probably via the hydrolysis of short xylooligosaccharides resulting from extracellular xylan hydrolysis, once they have been transported inside cells. Shows similar activity on xylans of different rate of arabinose or methylglucuronic substitution. Also displays high activity on aryl-xylosides. Is active on xylotetraose and xylotriose, but does not hydrolyze xylobiose, indicating that XynB is a xylanase and not a beta-xylosidase. The sequence is that of Endo-1,4-beta-xylanase B (xynB) from Paenibacillus barcinonensis.